The primary structure comprises 90 residues: Protein AF1q (90 aa).

Residues 24-32 carry the Nuclear export signal motif; it reads LSELEGLGL. At Ser-84 the chain carries Phosphoserine.

Belongs to the MLLT11 family. In terms of assembly, interacts with HSPA8 and LAMP2 isoform A; the interaction may target MLLT11 for degradation via chaperone-mediated autophagy. Interacts with TCF7. Ubiquitinated, leading to degradation. As to expression, expressed in myoepithelial cells of normal breast tissue (at protein level). Highly expressed in thymus. Expressed in colon, small intestine, prostate and ovary. Not detected in peripheral blood lymphocytes and spleen.

It is found in the nucleus. The protein resides in the cytoplasm. The protein localises to the cytoskeleton. Its subcellular location is the microtubule organizing center. It localises to the centrosome. Its function is as follows. Cofactor for the transcription factor TCF7. Involved in regulation of lymphoid development by driving multipotent hematopoietic progenitor cells towards a T cell fate. The chain is Protein AF1q (MLLT11) from Homo sapiens (Human).